The primary structure comprises 587 residues: GATA zinc finger domain-containing protein 3 (587 aa).

Over residues 53–74 the composition is skewed to low complexity; sequence NINNNINNNNNNNNNNNNNNIN. Disordered stretches follow at residues 53-141, 179-294, and 312-392; these read NINN…LKIP, QLAH…SSPS, and QTSP…ATIN. The segment covering 75 to 86 has biased composition (polar residues); sequence QYHQNHYDQYSD. 5 stretches are compositionally biased toward low complexity: residues 87-136, 183-202, 237-264, 272-292, and 316-333; these read NNCN…NNNN, NSSM…TPTS, NING…INNG, GNNN…NSSS, and SQQS…QQSQ. Polar residues-rich tracts occupy residues 340-358 and 365-379; these read INTT…TNSP and NESS…TPLS. A GATA-type zinc finger spans residues 500-525; that stretch reads CIFCGTMETPEWRKGPGGHKTLCNAC. A disordered region spans residues 536 to 587; the sequence is ENQNNGGSPNPQQNNVTTTTTTTTSTSTNSPNSNGNNFSPESAMSVSKLISD. The segment covering 538–575 has biased composition (low complexity); the sequence is QNNGGSPNPQQNNVTTTTTTTTSTSTNSPNSNGNNFSP. Residues 577 to 587 are compositionally biased toward polar residues; sequence SAMSVSKLISD.

The protein is GATA zinc finger domain-containing protein 3 (gtaC) of Dictyostelium discoideum (Social amoeba).